Consider the following 427-residue polypeptide: Zinc finger protein DPF3 (427 aa).

Positions 182-244 (LENDENADEV…NDAASQDDHD (63 aa)) are disordered. Residues 184 to 199 (NDENADEVNEEEDLEE) are compositionally biased toward acidic residues. Residues 233–244 (RRNDAASQDDHD) are compositionally biased toward basic and acidic residues. The C2H2-type zinc-finger motif lies at 247–270 (YVCDICGKRYKNRPGLSYHYAHTH). The disordered stretch occupies residues 272 to 301 (ASEEGDEAREQETRSSPVHRNENHKPQKGP). Over residues 279–296 (AREQETRSSPVHRNENHK) the composition is skewed to basic and acidic residues. 2 consecutive PHD-type zinc fingers follow at residues 308 to 368 (NNYC…CKSC) and 365 to 415 (CKSC…CREL).

This sequence belongs to the requiem/DPF family. Component of the BAF complex. Interacts with acetylated histones H3 and H4. Component of neuron-specific chromatin remodeling complex (nBAF complex), a subfamily of ATP-dependent SWI/SNF chromatin remodeling complexes. In terms of tissue distribution, expressed in the heart and somites.

Its subcellular location is the nucleus. Its function is as follows. Muscle-specific component of the BAF complex, a multiprotein complex involved in transcriptional activation and repression of select genes by chromatin remodeling (alteration of DNA-nucleosome topology). Specifically binds acetylated lysines on histone 3 and 4. In the complex, it acts as a tissue-specific anchor between histone acetylations and methylations and chromatin remodeling. It thereby probably plays an essential role in heart and skeletal muscle development. Belongs to the neuron-specific chromatin remodeling complex (nBAF complex) and plays a role in neural development. In Gallus gallus (Chicken), this protein is Zinc finger protein DPF3 (DPF3).